A 41-amino-acid polypeptide reads, in one-letter code: Large ribosomal subunit protein bL36 (41 aa).

The protein belongs to the bacterial ribosomal protein bL36 family.

The polypeptide is Large ribosomal subunit protein bL36 (Granulibacter bethesdensis (strain ATCC BAA-1260 / CGDNIH1)).